A 321-amino-acid chain; its full sequence is L-carnitine dehydrogenase (321 aa).

7 to 12 is an NAD(+) binding site; the sequence is GTGVIG.

The protein belongs to the 3-hydroxyacyl-CoA dehydrogenase family. L-carnitine dehydrogenase subfamily. Homodimer.

It is found in the cytoplasm. It catalyses the reaction carnitine + NAD(+) = 3-dehydrocarnitine + NADH + H(+). Its pathway is amine and polyamine metabolism; carnitine metabolism. Its function is as follows. Catalyzes the NAD(+)-dependent oxidation of L-carnitine to 3-dehydrocarnitine. The protein is L-carnitine dehydrogenase of Staphylococcus epidermidis (strain ATCC 12228 / FDA PCI 1200).